A 495-amino-acid polypeptide reads, in one-letter code: Aspartyl/glutamyl-tRNA(Asn/Gln) amidotransferase subunit B (495 aa).

Belongs to the GatB/GatE family. GatB subfamily. Heterotrimer of A, B and C subunits.

It catalyses the reaction L-glutamyl-tRNA(Gln) + L-glutamine + ATP + H2O = L-glutaminyl-tRNA(Gln) + L-glutamate + ADP + phosphate + H(+). The catalysed reaction is L-aspartyl-tRNA(Asn) + L-glutamine + ATP + H2O = L-asparaginyl-tRNA(Asn) + L-glutamate + ADP + phosphate + 2 H(+). In terms of biological role, allows the formation of correctly charged Asn-tRNA(Asn) or Gln-tRNA(Gln) through the transamidation of misacylated Asp-tRNA(Asn) or Glu-tRNA(Gln) in organisms which lack either or both of asparaginyl-tRNA or glutaminyl-tRNA synthetases. The reaction takes place in the presence of glutamine and ATP through an activated phospho-Asp-tRNA(Asn) or phospho-Glu-tRNA(Gln). The chain is Aspartyl/glutamyl-tRNA(Asn/Gln) amidotransferase subunit B from Gloeothece citriformis (strain PCC 7424) (Cyanothece sp. (strain PCC 7424)).